The chain runs to 264 residues: MDAIKKKMQAMKLEKDNAMDRADTLEQQNKEANLRAEKTEEEIRATQKKMQQVENELDQAQEQLSAANTKLDEKEKALQNAEGEVAALNRRIQLPEEDLERSEERLNTATTKLAEASQAADESERMRKVLENRSLSDEERMDALENQLKEARFLAEEADRKYDEVARKLAMVEADLERAEERAESGESKIVELEEELRVVGNNLKSLEVSEEKANQREETYKEQIKTLANKLKAAEARAEFAERSVQKLQKEVDRLEDELVNEK.

An N-acetylmethionine modification is found at Met-1. Disordered stretches follow at residues 1 to 56 and 92 to 126; these read MDAI…VENE and IQLPEEDLERSEERLNTATTKLAEASQAADESERM. Residues 1 to 264 adopt a coiled-coil conformation; sequence MDAIKKKMQA…RLEDELVNEK (264 aa). Positions 12 to 45 are enriched in basic and acidic residues; sequence KLEKDNAMDRADTLEQQNKEANLRAEKTEEEIRA.

The protein belongs to the tropomyosin family. As to quaternary structure, homodimer. In terms of tissue distribution, expressed in muscle (at protein level). Expressed in claw muscles.

Functionally, tropomyosin, in association with the troponin complex, plays a central role in the calcium dependent regulation of muscle contraction. This Charybdis feriata (Crucifix crab) protein is Tropomyosin Cha f 1.0101.